A 666-amino-acid polypeptide reads, in one-letter code: MDDFKKFELISDYKPAGDQQKAIDEMVNNINQGIQRQVLLGATGTGKTFSVANVIAKTQLKTLVLAHNKTLAAQLFAELKEMFPHNKVEYFVSYFDYYQPEAYKPITDTYIEKDSVTNAEIEMMRLSTINSLATRNDVIVVASVACIYASVSPIEFTKKNLYLHVGELIEFEQIKYKLVQLGYERKDYDLVPGTFRIRGDLIEIMSGYSDKFKIRISMFGNEVESIDLCDPITNNIISKEQRFILRSASEYIFDDSRLAIAIENIKNELDERVKFFLKNNQLIEAQRIEQRTKQDLESIVEFGFCSGVENYYRHLEHREPFQTPWTIFDFFSYNNQDWLLIVDESHISLPQVKGMHNTDRSRKQTLVEYGFRLPSALDNRPLNYDEFNKKLSKTIYVSATPNDEEIALSDNHIVSQIVRPTGLLDPIIEIRKTEHQIDDLINELMLLKNKNQRAFITVMTIRMAEDLTNYLNNTKIKAAYLHNELKTLERSVIINKLRKGIYDCVVGINLLREGLDVPEVAGVFIFDADKPGFFRSDKSLIQIIGRAARNADGKVIMYADVITQAMQTAINETKRRREIQLAFNLKHNIIPKTIIKPIHEDLSGHDYKQNAELYAAKASKNEYNQKIKELKKKMEEAAKKREYEVAAQYRDMIVELEAIKQSVKSK.

The Helicase ATP-binding domain maps to Asn28–Phe171. Gly41–Thr48 is an ATP binding site. Positions Tyr94 to Thr117 match the Beta-hairpin motif. Positions Gln436–Ile598 constitute a Helicase C-terminal domain. The UVR domain maps to Asn624–Ile659.

This sequence belongs to the UvrB family. Forms a heterotetramer with UvrA during the search for lesions. Interacts with UvrC in an incision complex.

It localises to the cytoplasm. Its function is as follows. The UvrABC repair system catalyzes the recognition and processing of DNA lesions. A damage recognition complex composed of 2 UvrA and 2 UvrB subunits scans DNA for abnormalities. Upon binding of the UvrA(2)B(2) complex to a putative damaged site, the DNA wraps around one UvrB monomer. DNA wrap is dependent on ATP binding by UvrB and probably causes local melting of the DNA helix, facilitating insertion of UvrB beta-hairpin between the DNA strands. Then UvrB probes one DNA strand for the presence of a lesion. If a lesion is found the UvrA subunits dissociate and the UvrB-DNA preincision complex is formed. This complex is subsequently bound by UvrC and the second UvrB is released. If no lesion is found, the DNA wraps around the other UvrB subunit that will check the other stand for damage. This is UvrABC system protein B from Ureaplasma parvum serovar 3 (strain ATCC 27815 / 27 / NCTC 11736).